The following is a 368-amino-acid chain: Quinolinate synthase (368 aa).

Residues H46 and S63 each coordinate iminosuccinate. Residue C110 participates in [4Fe-4S] cluster binding. Iminosuccinate-binding positions include 141–143 (YVN) and S162. Residue C230 participates in [4Fe-4S] cluster binding. Iminosuccinate is bound by residues 256–258 (HPE) and T273. C320 is a binding site for [4Fe-4S] cluster.

This sequence belongs to the quinolinate synthase family. Type 3 subfamily. [4Fe-4S] cluster is required as a cofactor.

Its subcellular location is the cytoplasm. The enzyme catalyses iminosuccinate + dihydroxyacetone phosphate = quinolinate + phosphate + 2 H2O + H(+). The protein operates within cofactor biosynthesis; NAD(+) biosynthesis; quinolinate from iminoaspartate: step 1/1. In terms of biological role, catalyzes the condensation of iminoaspartate with dihydroxyacetone phosphate to form quinolinate. This Bacillus cereus (strain B4264) protein is Quinolinate synthase.